The following is a 157-amino-acid chain: Endoribonuclease YbeY (157 aa).

Positions 114, 118, and 124 each coordinate Zn(2+).

It belongs to the endoribonuclease YbeY family. Zn(2+) serves as cofactor.

It localises to the cytoplasm. Its function is as follows. Single strand-specific metallo-endoribonuclease involved in late-stage 70S ribosome quality control and in maturation of the 3' terminus of the 16S rRNA. The protein is Endoribonuclease YbeY of Yersinia pestis.